The following is a 334-amino-acid chain: tRNA uridine(34) hydroxylase (334 aa).

One can recognise a Rhodanese domain in the interval 123 to 217 (SDPDVILVDT…YLEEVKQEES (95 aa)). Cys-177 serves as the catalytic Cysteine persulfide intermediate.

The protein belongs to the TrhO family.

The enzyme catalyses uridine(34) in tRNA + AH2 + O2 = 5-hydroxyuridine(34) in tRNA + A + H2O. Functionally, catalyzes oxygen-dependent 5-hydroxyuridine (ho5U) modification at position 34 in tRNAs. This Shewanella putrefaciens (strain CN-32 / ATCC BAA-453) protein is tRNA uridine(34) hydroxylase.